A 219-amino-acid chain; its full sequence is UPF0619 GPI-anchored membrane protein AFUA_3G00880 (219 aa).

The N-terminal stretch at 1–16 (MRFALTLTAFVGSVAA) is a signal peptide. An N-linked (GlcNAc...) asparagine glycan is attached at Asn85. 2 disordered regions span residues 107-144 (SQQFKVESSGSSTTSDSTSSASATGSASTSSSSTGTVS) and 160-205 (SSTL…SLTV). The span at 114 to 144 (SSGSSTTSDSTSSASATGSASTSSSSTGTVS) shows a compositional bias: low complexity. The GPI-like-anchor amidated asparagine moiety is linked to residue Asn198. Positions 199–219 (GAGSLTVPAGSLLLGLVALAL) are cleaved as a propeptide — removed in mature form.

Belongs to the UPF0619 family. Post-translationally, the GPI-like anchor contains a phosphoceramide lipid group. The anchor position has not been determined.

It localises to the cell membrane. This Aspergillus fumigatus (strain ATCC MYA-4609 / CBS 101355 / FGSC A1100 / Af293) (Neosartorya fumigata) protein is UPF0619 GPI-anchored membrane protein AFUA_3G00880.